Here is a 392-residue protein sequence, read N- to C-terminus: Monooxygenase AgnR1 (392 aa).

The N-terminal stretch at 1-20 (MSAPQKCAAVVVGAGPAGLA) is a signal peptide. N-linked (GlcNAc...) asparagine glycosylation is present at N134.

Monooxygenase; part of the gene cluster that mediates the biosynthesis of agnestins, dihydroxy-xanthone metabolites. The pathway begins with the assembly and cyclization of atrochrysone thioester by the non-reducing polyketide synthase Agnpks1. The atrochrysone carboxyl ACP thioesterase AgnL7 then breaks the thioester bond and releases the atrochrysone carboxylic acid as the first enzyme-free intermediate. The decarboxylase AgnL1 then catalyzes the concerted decarboxylation-elimination required to convert atochrysone carboxylic acid into emodin anthrone, which is further oxidized to emodin by the anthrone oxygenase AgnL2. Emodin then undergoes reduction catalyzed by the oxidoreductase AgnL4 to yield the dihydroquinone tautomer which is the substrate for reduction by the short chain dehydrogenase AgnL6 reduction to produce hydroxyketone, followed by AgnL8 dehydration and likely spontaneous autoxidation to chrysophanol. Baeyer-Villiger oxidation by the oxidase AgnL3 leads to monodictyphenone via cleavage of the C-10/C-10a bond of chrysophanol. Alternative cleavage at the C-4a/C-10 bond of chrysophanol also leads to the formation some cephalone F. Further conversion to agnestins A and B, requires reduction to dihydro-monodictyphenone, oxidation to agnestin C probably via an epoxide, and rearrangement to either agnestin A or agnestin B directly, although agnestin A or agnestin B can also interconvert. Within the cluster, AgnR1 is the only unassigned oxidoreductase present which could be involved in this conversion. However, AgnR1 seems not to be involved in this step, and thus genes involved in the proposed oxidation/reduction may be located elsewhere on the genome. Further agnestin A derivatives are probably formed by spontaneous decarboxylations, dehydrations and methanolysis reactions. This chain is Monooxygenase AgnR1, found in Paecilomyces divaricatus (Penicillium divaricatum).